A 242-amino-acid polypeptide reads, in one-letter code: NAD-dependent protein deacetylase (242 aa).

Residues 1 to 242 (MQQFEEVHSI…EFVEGLSSRK (242 aa)) form the Deacetylase sirtuin-type domain. NAD(+)-binding residues include alanine 23, threonine 27, phenylalanine 34, arginine 35, glutamine 102, isoleucine 104, aspartate 105, and histidine 120. Nicotinamide is bound at residue phenylalanine 34. Residues isoleucine 104 and aspartate 105 each coordinate nicotinamide. Histidine 120 acts as the Proton acceptor in catalysis. Residues cysteine 128, cysteine 131, cysteine 148, and cysteine 151 each coordinate Zn(2+). NAD(+) is bound by residues threonine 187, serine 188, asparagine 213, and isoleucine 231.

This sequence belongs to the sirtuin family. Class U subfamily. It depends on Zn(2+) as a cofactor.

The protein resides in the cytoplasm. It catalyses the reaction N(6)-acetyl-L-lysyl-[protein] + NAD(+) + H2O = 2''-O-acetyl-ADP-D-ribose + nicotinamide + L-lysyl-[protein]. Functionally, NAD-dependent protein deacetylase which modulates the activities of several enzymes which are inactive in their acetylated form. This is NAD-dependent protein deacetylase from Bacillus cereus (strain ATCC 10987 / NRS 248).